A 556-amino-acid polypeptide reads, in one-letter code: Beta-caryophyllene synthase TPS9FN (556 aa).

5 residues coordinate (2E,6E)-farnesyl diphosphate: arginine 273, aspartate 310, aspartate 314, arginine 451, and aspartate 454. Positions 310 and 314 each coordinate Mg(2+). The DDXXD motif signature appears at 310-314 (DDIYD). The Mg(2+) site is built by aspartate 454, serine 458, and glutamate 462.

Belongs to the terpene synthase family. Tpsb subfamily. It depends on Mg(2+) as a cofactor. Mn(2+) is required as a cofactor. In terms of tissue distribution, expressed in glandular trichomes two to four weeks after flowering onset.

It catalyses the reaction (2E,6E)-farnesyl diphosphate = (-)-(E)-beta-caryophyllene + diphosphate. The catalysed reaction is (2E,6E)-farnesyl diphosphate = alpha-humulene + diphosphate. The protein operates within secondary metabolite biosynthesis; terpenoid biosynthesis. Involved in sesquiterpene olefins biosynthesis, constituants of cannabinoids and terpenoids-rich resins. Catalyzes mainly the conversion of (2E)-farnesyl diphosphate to beta-caryophyllene and alpha-humulene. Can also use (2E)-geranyl diphosphate as substrate with low efficiency. This chain is Beta-caryophyllene synthase TPS9FN, found in Cannabis sativa (Hemp).